The chain runs to 393 residues: Chalcone synthase 1 (393 aa).

Cys166 is an active-site residue.

It belongs to the thiolase-like superfamily. Chalcone/stilbene synthases family.

It catalyses the reaction (E)-4-coumaroyl-CoA + 3 malonyl-CoA + 3 H(+) = 2',4,4',6'-tetrahydroxychalcone + 3 CO2 + 4 CoA. The protein operates within secondary metabolite biosynthesis; flavonoid biosynthesis. Its function is as follows. The primary product of this enzyme is 4,2',4',6'-tetrahydroxychalcone (also termed naringenin-chalcone or chalcone) which can under specific conditions spontaneously isomerize into naringenin. The polypeptide is Chalcone synthase 1 (CHS1) (Ruta graveolens (Common rue)).